The following is a 585-amino-acid chain: Eukaryotic translation initiation factor 3 subunit D (585 aa).

Over residues 110–130 (GGGTVFRGRGQRGVGQRGGRA) the composition is skewed to gly residues. A disordered region spans residues 110 to 152 (GGGTVFRGRGQRGVGQRGGRAGFQRVGAGRGQGGDRYYDNRSA). Residues 300–314 (SIDLVTVNENAADAP) are RNA gate. A disordered region spans residues 560-585 (VPPNTFEEDDEAAEEQEEKAEDESEE). A compositionally biased stretch (acidic residues) spans 565–585 (FEEDDEAAEEQEEKAEDESEE).

The protein belongs to the eIF-3 subunit D family. Component of the eukaryotic translation initiation factor 3 (eIF-3) complex.

Its subcellular location is the cytoplasm. In terms of biological role, mRNA cap-binding component of the eukaryotic translation initiation factor 3 (eIF-3) complex, which is involved in protein synthesis of a specialized repertoire of mRNAs and, together with other initiation factors, stimulates binding of mRNA and methionyl-tRNAi to the 40S ribosome. The eIF-3 complex specifically targets and initiates translation of a subset of mRNAs involved in cell proliferation. In the eIF-3 complex, eif3d specifically recognizes and binds the 7-methylguanosine cap of a subset of mRNAs. The chain is Eukaryotic translation initiation factor 3 subunit D from Aspergillus fumigatus (strain CBS 144.89 / FGSC A1163 / CEA10) (Neosartorya fumigata).